The primary structure comprises 152 residues: Dimethylsulfoniopropionate lyase DddW (152 aa).

The Cupin type-2 domain maps to I69–V124. H83, E87, Y89, and H121 together coordinate Fe cation.

It belongs to the non-heme iron-dependent dioxygenase family. As to quaternary structure, homodimer. It depends on Fe(2+) as a cofactor.

It carries out the reaction S,S-dimethyl-beta-propiothetin = acrylate + dimethyl sulfide + H(+). Able to cleave dimethylsulfoniopropionate (DMSP), releasing dimethyl sulfide (DMS) and acrylate. DMS is the principal form by which sulfur is transported from oceans to the atmosphere. The polypeptide is Dimethylsulfoniopropionate lyase DddW (Ruegeria pomeroyi (strain ATCC 700808 / DSM 15171 / DSS-3) (Silicibacter pomeroyi)).